Consider the following 541-residue polypeptide: Chaperonin GroEL, cyanelle (541 aa).

ATP is bound by residues 29-32 (TLGP), 86-90 (DGTTT), glycine 413, 479-481 (NAA), and aspartate 495.

It belongs to the chaperonin (HSP60) family. As to quaternary structure, forms a cylinder of 14 subunits composed of two heptameric rings stacked back-to-back. Interacts with the co-chaperonin GroES.

The protein resides in the plastid. It localises to the cyanelle. The enzyme catalyses ATP + H2O + a folded polypeptide = ADP + phosphate + an unfolded polypeptide.. In terms of biological role, together with its co-chaperonin GroES, plays an essential role in assisting protein folding. The GroEL-GroES system forms a nano-cage that allows encapsulation of the non-native substrate proteins and provides a physical environment optimized to promote and accelerate protein folding. The protein is Chaperonin GroEL, cyanelle of Cyanophora paradoxa.